The sequence spans 103 residues: N(4)-acetylcytidine amidohydrolase (103 aa).

The ASCH domain occupies 6–94; it reads ITFFQRFQND…IAEIYPNQTQ (89 aa). Lys-21 serves as the catalytic Proton acceptor. The active-site Nucleophile is Thr-24. Glu-74 acts as the Proton donor in catalysis.

It belongs to the N(4)-acetylcytidine amidohydrolase family.

The catalysed reaction is N(4)-acetylcytidine + H2O = cytidine + acetate + H(+). It carries out the reaction N(4)-acetyl-2'-deoxycytidine + H2O = 2'-deoxycytidine + acetate + H(+). It catalyses the reaction N(4)-acetylcytosine + H2O = cytosine + acetate + H(+). Functionally, catalyzes the hydrolysis of N(4)-acetylcytidine (ac4C). This chain is N(4)-acetylcytidine amidohydrolase (yqfB), found in Salmonella schwarzengrund (strain CVM19633).